The chain runs to 485 residues: Vacuolar fusion protein CCZ1 homolog (485 aa).

This sequence belongs to the CCZ1 family. As to quaternary structure, component of the Mon1-Ccz1 guanyl-nucleotide exchange factor complex made up of Mon1, Ccz1 and Bulli; the interaction of Bulli with the Mon1-Ccz1 heterodimer is mediated via the C-terminal Mic1 domain of Bulli. Mon1 and Ccz1 form a stable complex which displays Rab7 GEF activity with or without Bulli; GEF activity is enhanced by Bulli possibly by improving membrane association of the complex. Interacts with Rab5 and Rab7; preferentially binds GTP-bound Rab5 and GDP-bound Rab7.

The protein resides in the cytoplasm. The protein localises to the cytosol. Its activity is regulated as follows. The Rab7 guanyl-nucleotide exchange factor (GEF) activity of the Mon1-Ccz1 complex is autoinhibited by the N-terminal disordered region of Mon1. GEF activity is stimulated by Rab5-mediated recruitment to membranes. Its function is as follows. Part of the Mon1-Ccz1 guanyl-nucleotide exchange factor complex specific for Rab7 that promotes the exchange of GDP to GTP, converting Rab7 from an inactive GDP-bound form into an active GTP-bound form. Required for recruitment of Rab7 to endosomal and autophagosomal membranes to mediate endolysosomal and autolysosomal vesicle maturation. Required for fusion of multivesicular bodies and lysosomes but not their formation or trafficking. Involved in the replacement of Rab5 (and possibly Rab4) with Rab7, also known as Rab conversion or the Rab cascade, during endosomal maturation. The Mon1-Ccz1 complex is recruited to phosphatidylinositol 3-phosphate (PtdIns[3]P) enriched membranes by Rab5, which stimulates recruitment and guanyl-nucleotide exchange of Rab7. Together with Rab7 required for autolysosome formation in fat cells and autophagic degradation during starvation-induced basal and developmental autophagy. This Drosophila melanogaster (Fruit fly) protein is Vacuolar fusion protein CCZ1 homolog.